Reading from the N-terminus, the 59-residue chain is Large ribosomal subunit protein uL30 (59 aa).

This sequence belongs to the universal ribosomal protein uL30 family. As to quaternary structure, part of the 50S ribosomal subunit.

This chain is Large ribosomal subunit protein uL30, found in Desulforamulus reducens (strain ATCC BAA-1160 / DSM 100696 / MI-1) (Desulfotomaculum reducens).